A 122-amino-acid polypeptide reads, in one-letter code: Large ribosomal subunit protein uL14 (122 aa).

It belongs to the universal ribosomal protein uL14 family. As to quaternary structure, part of the 50S ribosomal subunit. Forms a cluster with proteins L3 and L19. In the 70S ribosome, L14 and L19 interact and together make contacts with the 16S rRNA in bridges B5 and B8.

In terms of biological role, binds to 23S rRNA. Forms part of two intersubunit bridges in the 70S ribosome. This Geotalea daltonii (strain DSM 22248 / JCM 15807 / FRC-32) (Geobacter daltonii) protein is Large ribosomal subunit protein uL14.